A 129-amino-acid polypeptide reads, in one-letter code: Large ribosomal subunit protein bL17 (129 aa).

Belongs to the bacterial ribosomal protein bL17 family. Part of the 50S ribosomal subunit. Contacts protein L32.

In Thiobacillus denitrificans (strain ATCC 25259 / T1), this protein is Large ribosomal subunit protein bL17.